The chain runs to 761 residues: Ribonucleoside-diphosphate reductase subunit alpha (761 aa).

Residues 5 to 95 (LFVTKRDGRK…IFHLRKKAYG (91 aa)) enclose the ATP-cone domain. ATP contacts are provided by residues K9, 15-21 (EKINLDK), T55, and K91. Residue T209 coordinates GDP. A disulfide bridge links C225 with C462. DTTP-binding positions include 232–234 (DSL), R262, and R269. Residue N437 participates in GDP binding. The active-site Proton acceptor is the N437. The Cysteine radical intermediate role is filled by C439. GDP is bound by residues E441 and 623-625 (ETS). The active-site Proton acceptor is E441.

This sequence belongs to the ribonucleoside diphosphate reductase large chain family. In terms of assembly, tetramer of two alpha and two beta subunits.

It carries out the reaction a 2'-deoxyribonucleoside 5'-diphosphate + [thioredoxin]-disulfide + H2O = a ribonucleoside 5'-diphosphate + [thioredoxin]-dithiol. Under complex allosteric control mediated by deoxynucleoside triphosphates and ATP binding to separate specificity and activation sites on the alpha subunit. The type of nucleotide bound at the specificity site determines substrate preference. It seems probable that ATP makes the enzyme reduce CDP and UDP, dGTP favors ADP reduction and dTTP favors GDP reduction. Stimulated by ATP and inhibited by dATP binding to the activity site. Functionally, provides the precursors necessary for DNA synthesis. Catalyzes the biosynthesis of deoxyribonucleotides from the corresponding ribonucleotides. The sequence is that of Ribonucleoside-diphosphate reductase subunit alpha (nrdA) from Buchnera aphidicola subsp. Acyrthosiphon pisum (strain APS) (Acyrthosiphon pisum symbiotic bacterium).